The chain runs to 164 residues: Protein SprT (164 aa).

In terms of domain architecture, SprT-like spans 13 to 156; sequence YQQAEAFFKR…LCKRCREILV (144 aa). Residue H69 participates in Zn(2+) binding. Residue E70 is part of the active site. H73 contributes to the Zn(2+) binding site.

It belongs to the SprT family. It depends on Zn(2+) as a cofactor.

The protein localises to the cytoplasm. In Pseudomonas putida (strain ATCC 700007 / DSM 6899 / JCM 31910 / BCRC 17059 / LMG 24140 / F1), this protein is Protein SprT.